A 1342-amino-acid chain; its full sequence is DNA-directed RNA polymerase subunit beta (1342 aa).

An N6-acetyllysine mark is found at Lys1022 and Lys1200.

It belongs to the RNA polymerase beta chain family. As to quaternary structure, the RNAP catalytic core consists of 2 alpha, 1 beta, 1 beta' and 1 omega subunit. When a sigma factor is associated with the core the holoenzyme is formed, which can initiate transcription.

The catalysed reaction is RNA(n) + a ribonucleoside 5'-triphosphate = RNA(n+1) + diphosphate. DNA-dependent RNA polymerase catalyzes the transcription of DNA into RNA using the four ribonucleoside triphosphates as substrates. The sequence is that of DNA-directed RNA polymerase subunit beta from Escherichia coli O6:K15:H31 (strain 536 / UPEC).